A 96-amino-acid polypeptide reads, in one-letter code: MLKPLGDRVVVRFDDEKEQTVGGFVLAGTHKESTRKATVLAVSETGVRTITGDSVLPSVSVGQEVLVENGHDLEVTVDDEKVSIIRESDIIAIVTK.

It belongs to the GroES chaperonin family. As to quaternary structure, heptamer of 7 subunits arranged in a ring. Interacts with the chaperonin GroEL.

Its subcellular location is the cytoplasm. Its function is as follows. Together with the chaperonin GroEL, plays an essential role in assisting protein folding. The GroEL-GroES system forms a nano-cage that allows encapsulation of the non-native substrate proteins and provides a physical environment optimized to promote and accelerate protein folding. GroES binds to the apical surface of the GroEL ring, thereby capping the opening of the GroEL channel. The protein is Co-chaperonin GroES of Streptococcus pyogenes serotype M18 (strain MGAS8232).